The sequence spans 775 residues: MAPAGHILTLLLWGHLLELWTPGHSANPSYPRLRLSHKELLELNRTSIFQSPLGFLDLHTMLLDEYQERLFVGGRDLVYSLNLERVSDGYREIYWPSTAVKVEECIMKGKDANECANYIRVLHHYNRTHLLTCATGAFDPHCAFIRVGHHSEEPLFHLESHRSERGRGRCPFDPNSSFVSTLVGNELFAGLYSDYWGRDSAIFRSMGKLGHIRTEHDDERLLKEPKFVGSYMIPDNEDRDDNKMYFFFTEKALEAENNAHTIYTRVGRLCVNDMGGQRILVNKWSTFLKARLVCSVPGMNGIDTYFDELEDVFLLPTRDPKNPVIFGLFNTTSNIFRGHAVCVYHMSSIREAFNGPYAHKEGPEYHWSLYEGKVPYPRPGSCASKVNGGKYGTTKDYPDDAIRFARMHPLMYQPIKPVHKKPILVKTDGKYNLRQLAVDRVEAEDGQYDVLFIGTDTGIVLKVITIYNQETEWMEEVILEELQIFKDPAPIISMEISSKRQQLYIGSASAVAQVRFHHCDMYGSACADCCLARDPYCAWDGISCSRYYPTGAHAKRRFRRQDVRHGNAAQQCFGQQFVGDALDRTEERLAYGIESNSTLLECTPRSLQAKVIWFVQKGRDVRKEEVKTDDRVVKMDLGLLFLRVRKSDAGTYFCQTVEHNFVHTVRKITLEVVEEHKVEGMFHKDHEEERHHKMPCPPLSGMSQGTKPWYKEFLQLIGYSNFQRVEEYCEKVWCTDKKRKKLKMSPSKWKYANPQEKRLRSKAEHFRLPRHTLLS.

A signal peptide spans 1-25; the sequence is MAPAGHILTLLLWGHLLELWTPGHS. Residues 32 to 516 form the Sema domain; that stretch reads RLRLSHKELL…SASAVAQVRF (485 aa). The N-linked (GlcNAc...) asparagine glycan is linked to Asn44. A disulfide bridge links Cys105 with Cys115. N-linked (GlcNAc...) asparagine glycosylation is present at Asn126. A disulfide bond links Cys133 and Cys142. Residues Asn175 and Asn330 are each glycosylated (N-linked (GlcNAc...) asparagine). Cystine bridges form between Cys270–Cys382, Cys294–Cys342, and Cys519–Cys537. The region spanning 581-669 is the Ig-like C2-type domain; that stretch reads ALDRTEERLA…NFVHTVRKIT (89 aa). N-linked (GlcNAc...) asparagine glycosylation is present at Asn596. Residues Cys654 and Cys729 are joined by a disulfide bond.

The protein belongs to the semaphorin family. As to quaternary structure, interacts with PLXND1. Detected in neurons in the thalamus. Detected in embryonic vasculature. Developing lungs, developing skeletal elements and ventral horns of the developing neural tube. Correlates positively with tumor progression.

It localises to the secreted. In terms of biological role, plays an important role in signaling via the cell surface receptor PLXND1. Mediates reorganization of the actin cytoskeleton, leading to the retraction of cell projections. Promotes focal adhesion disassembly and inhibits adhesion of endothelial cells to the extracellular matrix. Regulates angiogenesis, both during embryogenesis and after birth. Can down-regulate sprouting angiogenesis. Required for normal vascular patterning during embryogenesis. Plays an important role in ensuring the specificity of synapse formation. This chain is Semaphorin-3E (Sema3e), found in Mus musculus (Mouse).